We begin with the raw amino-acid sequence, 292 residues long: MLSGSIVALLTPFKADGEVDFDGLQKLVEYHIAAGTNGIVAVGTTGESSTLTVEEHVKVVNKTVEFVNGRIPVIAGTGANATHESVTFSRLLNDSGIDACLSVTPYYNKPTQEGLFQHYKAIAEVSNVPQILYNVPGRTAVDLLPEPVARLAELENIVALKDATGDLNRVAIHRELCGEDFILLSGDDATGLDFVKLGGQGVISVTNNIAAKDMADMFRLALEGRFEEAEVINQRLMPLHKNLFIESSPIPVKWAATQLGLIECGHLRLPLTELSEKCHPIVAQAMTDAGIY.

Threonine 45 is a binding site for pyruvate. The Proton donor/acceptor role is filled by tyrosine 133. The active-site Schiff-base intermediate with substrate is lysine 161. Isoleucine 203 contributes to the pyruvate binding site.

It belongs to the DapA family. In terms of assembly, homotetramer; dimer of dimers.

The protein localises to the cytoplasm. It catalyses the reaction L-aspartate 4-semialdehyde + pyruvate = (2S,4S)-4-hydroxy-2,3,4,5-tetrahydrodipicolinate + H2O + H(+). It functions in the pathway amino-acid biosynthesis; L-lysine biosynthesis via DAP pathway; (S)-tetrahydrodipicolinate from L-aspartate: step 3/4. Functionally, catalyzes the condensation of (S)-aspartate-beta-semialdehyde [(S)-ASA] and pyruvate to 4-hydroxy-tetrahydrodipicolinate (HTPA). This chain is 4-hydroxy-tetrahydrodipicolinate synthase, found in Vibrio vulnificus (strain CMCP6).